An 828-amino-acid polypeptide reads, in one-letter code: Periplasmic nitrate reductase (828 aa).

The segment at residues 1–31 (MKLSRRSFMKANAVAAAAAAAGLSVPGVARA) is a signal peptide (tat-type signal). Residues 39 to 95 (IKWDKAPCRFCGTGCGVLVGTQQGRVVACQGDPDAPVNRGLNCIKGYFLPKIMYGKD) enclose the 4Fe-4S Mo/W bis-MGD-type domain. [4Fe-4S] cluster is bound by residues Cys46, Cys49, Cys53, and Cys81. Mo-bis(molybdopterin guanine dinucleotide) is bound by residues Lys83, Gln150, Asn175, Cys179, 212 to 219 (WGSNMAEM), 243 to 247 (STFQH), 262 to 264 (QSD), Met372, Gln376, Asn482, 508 to 509 (SD), Lys531, Asp558, and 718 to 727 (TGRVLEHWHT). Phe794 contributes to the substrate binding site. The Mo-bis(molybdopterin guanine dinucleotide) site is built by Asn802 and Lys819.

Belongs to the prokaryotic molybdopterin-containing oxidoreductase family. NasA/NapA/NarB subfamily. Component of the periplasmic nitrate reductase NapAB complex composed of NapA and NapB. [4Fe-4S] cluster serves as cofactor. It depends on Mo-bis(molybdopterin guanine dinucleotide) as a cofactor. Predicted to be exported by the Tat system. The position of the signal peptide cleavage has not been experimentally proven.

It is found in the periplasm. The catalysed reaction is 2 Fe(II)-[cytochrome] + nitrate + 2 H(+) = 2 Fe(III)-[cytochrome] + nitrite + H2O. In terms of biological role, catalytic subunit of the periplasmic nitrate reductase complex NapAB. Receives electrons from NapB and catalyzes the reduction of nitrate to nitrite. The protein is Periplasmic nitrate reductase of Salmonella schwarzengrund (strain CVM19633).